Reading from the N-terminus, the 215-residue chain is MAIGLIGRKVGMTRVFTDEGASIPVTVIEATPNRISQVKTLEQDGYQAVQVTVGERRPARVTSSLKGHFAKANVEPGRKLQEFRFGAEEGRDIKASGELKVDLFEVGQKVDVTGITRGRGFAGVVRRYHFGGGDASHGNSLSHRAPGSIGQCQTPGRVFKGKKMAGQMGNVRRTVQNLELVRIDEGRQLLLIKGAIPGAPGGDVIVKPAVKTVVK.

N5-methylglutamine is present on Q153.

This sequence belongs to the universal ribosomal protein uL3 family. As to quaternary structure, part of the 50S ribosomal subunit. Forms a cluster with proteins L14 and L19. In terms of processing, methylated by PrmB.

Functionally, one of the primary rRNA binding proteins, it binds directly near the 3'-end of the 23S rRNA, where it nucleates assembly of the 50S subunit. The sequence is that of Large ribosomal subunit protein uL3 from Nitrosococcus oceani (strain ATCC 19707 / BCRC 17464 / JCM 30415 / NCIMB 11848 / C-107).